A 379-amino-acid polypeptide reads, in one-letter code: Wnt inhibitory factor 1 (379 aa).

An N-terminal signal peptide occupies residues 1 to 28 (MARRSAFPAAALWLWSILLCLLALRAEA). A WIF domain is found at 38-177 (LWIDAHQARV…PQNAIFFKTC (140 aa)). N-linked (GlcNAc...) asparagine glycosylation is present at asparagine 88. 7 disulfides stabilise this stretch: cysteine 140–cysteine 177, cysteine 182–cysteine 192, cysteine 186–cysteine 198, cysteine 200–cysteine 209, cysteine 214–cysteine 224, cysteine 218–cysteine 230, and cysteine 232–cysteine 241. 5 EGF-like domains span residues 178–210 (QQAE…PHCE), 211–242 (KALC…VNCD), 243–271 (KANC…LEGE), 274–306 (EISK…DLCS), and 307–338 (KPVC…RHCN). The N-linked (GlcNAc...) asparagine glycan is linked to asparagine 245. Disulfide bonds link cysteine 246-cysteine 256, cysteine 250-cysteine 262, cysteine 278-cysteine 288, cysteine 282-cysteine 294, cysteine 296-cysteine 305, cysteine 310-cysteine 320, cysteine 314-cysteine 326, and cysteine 328-cysteine 337. The segment at 354 to 379 (AQLRQHTPSLKKAEERRDPPESNYIW) is disordered. The segment covering 364-373 (KKAEERRDPP) has biased composition (basic and acidic residues).

Interacts with MYOC.

It is found in the secreted. Its function is as follows. Binds to WNT proteins and inhibits their activities. May be involved in mesoderm segmentation. This chain is Wnt inhibitory factor 1 (WIF1), found in Homo sapiens (Human).